Consider the following 446-residue polypeptide: Argininosuccinate synthase (446 aa).

ATP is bound by residues 17-25 (AFSGGLDTS) and Ala-43. Position 99 (Tyr-99) interacts with L-citrulline. ATP-binding residues include Gly-129 and Thr-131. Positions 131, 135, and 136 each coordinate L-aspartate. Residue Asn-135 participates in L-citrulline binding. Asp-136 contributes to the ATP binding site. The L-citrulline site is built by Arg-139 and Ser-192. An ATP-binding site is contributed by Asp-194. Positions 201, 203, and 280 each coordinate L-citrulline.

It belongs to the argininosuccinate synthase family. Type 2 subfamily. As to quaternary structure, homotetramer.

The protein localises to the cytoplasm. The catalysed reaction is L-citrulline + L-aspartate + ATP = 2-(N(omega)-L-arginino)succinate + AMP + diphosphate + H(+). It functions in the pathway amino-acid biosynthesis; L-arginine biosynthesis; L-arginine from L-ornithine and carbamoyl phosphate: step 2/3. The sequence is that of Argininosuccinate synthase from Burkholderia mallei (strain NCTC 10247).